The sequence spans 549 residues: Small ribosomal subunit protein bS1 (549 aa).

S1 motif domains are found at residues 21 to 87 (GSIV…LSRE), 105 to 171 (KATV…VSRR), 192 to 260 (GSEV…LGLK), 277 to 347 (NSKL…LGLK), 364 to 434 (GDKV…LGIK), and 451 to 512 (GAVV…LSVK).

The protein belongs to the bacterial ribosomal protein bS1 family.

Its function is as follows. Binds mRNA; thus facilitating recognition of the initiation point. It is needed to translate mRNA with a short Shine-Dalgarno (SD) purine-rich sequence. The sequence is that of Small ribosomal subunit protein bS1 (rpsA) from Haemophilus influenzae (strain ATCC 51907 / DSM 11121 / KW20 / Rd).